We begin with the raw amino-acid sequence, 202 residues long: Molybdenum cofactor guanylyltransferase (202 aa).

GTP is bound by residues 9-11 (LAG), Lys22, Asp70, and Asp96. Asp96 is a binding site for Mg(2+).

Belongs to the MobA family. As to quaternary structure, monomer. Requires Mg(2+) as cofactor.

Its subcellular location is the cytoplasm. It carries out the reaction Mo-molybdopterin + GTP + H(+) = Mo-molybdopterin guanine dinucleotide + diphosphate. Its function is as follows. Transfers a GMP moiety from GTP to Mo-molybdopterin (Mo-MPT) cofactor (Moco or molybdenum cofactor) to form Mo-molybdopterin guanine dinucleotide (Mo-MGD) cofactor. This Desulfosudis oleivorans (strain DSM 6200 / JCM 39069 / Hxd3) (Desulfococcus oleovorans) protein is Molybdenum cofactor guanylyltransferase.